Consider the following 324-residue polypeptide: Phospho-N-acetylmuramoyl-pentapeptide-transferase (324 aa).

10 consecutive transmembrane segments (helical) span residues 5–25, 55–75, 81–101, 122–142, 147–167, 176–196, 203–223, 227–247, 250–270, and 302–322; these read VILF…PIFI, GGLM…DIFF, TYML…DDFI, LIAL…VVSI, VSLD…VGGS, LDGL…VLAW, VAIF…FNAH, VFMG…IAIL, LEIL…SVII, and VVVT…YIEV.

It belongs to the glycosyltransferase 4 family. MraY subfamily. It depends on Mg(2+) as a cofactor.

Its subcellular location is the cell membrane. It catalyses the reaction UDP-N-acetyl-alpha-D-muramoyl-L-alanyl-gamma-D-glutamyl-meso-2,6-diaminopimeloyl-D-alanyl-D-alanine + di-trans,octa-cis-undecaprenyl phosphate = di-trans,octa-cis-undecaprenyl diphospho-N-acetyl-alpha-D-muramoyl-L-alanyl-D-glutamyl-meso-2,6-diaminopimeloyl-D-alanyl-D-alanine + UMP. The protein operates within cell wall biogenesis; peptidoglycan biosynthesis. Catalyzes the initial step of the lipid cycle reactions in the biosynthesis of the cell wall peptidoglycan: transfers peptidoglycan precursor phospho-MurNAc-pentapeptide from UDP-MurNAc-pentapeptide onto the lipid carrier undecaprenyl phosphate, yielding undecaprenyl-pyrophosphoryl-MurNAc-pentapeptide, known as lipid I. The chain is Phospho-N-acetylmuramoyl-pentapeptide-transferase from Anoxybacillus flavithermus (strain DSM 21510 / WK1).